Here is a 158-residue protein sequence, read N- to C-terminus: Succinate dehydrogenase assembly factor 2, mitochondrial (158 aa).

Residues 1–23 (MLRQLLATARRLLLPLATPKRCL) constitute a mitochondrion transit peptide.

The protein belongs to the SDHAF2 family. As to quaternary structure, interacts with the flavoprotein subunit within the SDH catalytic dimer.

It is found in the mitochondrion matrix. Its function is as follows. Plays an essential role in the assembly of succinate dehydrogenase (SDH), an enzyme complex (also referred to as respiratory complex II) that is a component of both the tricarboxylic acid (TCA) cycle and the mitochondrial electron transport chain, and which couples the oxidation of succinate to fumarate with the reduction of ubiquinone (coenzyme Q) to ubiquinol. Required for flavinylation (covalent attachment of FAD) of the flavoprotein subunit of the SDH catalytic dimer. The chain is Succinate dehydrogenase assembly factor 2, mitochondrial from Drosophila virilis (Fruit fly).